We begin with the raw amino-acid sequence, 66 residues long: Large ribosomal subunit protein bL33c (66 aa).

It belongs to the bacterial ribosomal protein bL33 family.

It is found in the plastid. It localises to the chloroplast. This Chloranthus spicatus (Chulantree) protein is Large ribosomal subunit protein bL33c.